The following is a 139-amino-acid chain: Large ribosomal subunit protein uL16c (139 aa).

The interval 1-20 is disordered; it reads MLSPKRTKYRKHHRGRMKGK.

This sequence belongs to the universal ribosomal protein uL16 family. In terms of assembly, part of the 50S ribosomal subunit.

It is found in the plastid. Its subcellular location is the chloroplast. The polypeptide is Large ribosomal subunit protein uL16c (Pleurastrum terricola (Filamentous green alga)).